A 355-amino-acid polypeptide reads, in one-letter code: Replication-associated protein (355 aa).

Residues 11–114 form the CRESS-DNA virus Rep endonuclease domain; sequence SHRNANTFLT…PLAVFERGTF (104 aa). An RCR-1 motif is present at residues 18 to 21; that stretch reads FLTY. Glu52, His60, and His62 together coordinate a divalent metal cation. The short motif at 60 to 62 is the RCR-2 element; the sequence is HLH. Tyr100 acts as the For DNA cleavage activity in catalysis. The short motif at 100–103 is the RCR-3 element; that stretch reads YILK. Glu104 is an a divalent metal cation binding site. The oligomerization stretch occupies residues 175 to 187; that stretch reads SANKLFPEIQEEF. Position 229–236 (229–236) interacts with ATP; the sequence is GPTRTGKS. Residues 252–270 are transactivation; that stretch reads VDWSSYNEDAIYNIVDDIP. The Nuclear localization signal motif lies at 292–303; the sequence is KYGKKKKVQKKS.

This sequence belongs to the geminiviridae Rep protein family. Homooligomer. Rep binds to repeated DNA motifs (iterons). Forms the O-complex, which is a Rep-DNA complex involved in the initiation of RCR. Part of the C- and V-complexes which are RepA-Rep-DNA complexes involved in the c-sense and v-sense transcription. Mg(2+) serves as cofactor. Requires Mn(2+) as cofactor.

The protein localises to the host nucleus. Its function is as follows. Essential for the replication of viral ssDNA. The closed circular ssDNA genome is first converted to a superhelical dsDNA. Rep binds a specific region at the genome origin of replication. It introduces an endonucleolytic nick within the conserved sequence 5'-TAATATTAC-3' in the intergenic region of the genome present in all geminiviruses, thereby initiating the rolling circle replication (RCR). Following cleavage, binds covalently to the 5'-phosphate of DNA as a tyrosyl ester. The cleavage gives rise to a free 3'-OH that serves as a primer for the cellular DNA polymerase. The polymerase synthesizes the (+) strand DNA by rolling circle mechanism. After one round of replication, a Rep-catalyzed nucleotidyl transfer reaction releases a circular single-stranded virus genome, thereby terminating the replication. Displays origin-specific DNA cleavage, nucleotidyl transferase, ATPase and helicase activities. Acts as an inhibitor of C-sense gene transcription. The polypeptide is Replication-associated protein (Maize streak virus genotype A (isolate South Africa) (MSV)).